The sequence spans 178 residues: Large ribosomal subunit protein uL5 (178 aa).

Belongs to the universal ribosomal protein uL5 family. In terms of assembly, part of the 50S ribosomal subunit; contacts the 5S rRNA and probably tRNA. Forms a bridge to the 30S subunit in the 70S ribosome.

Functionally, this is one of the proteins that bind and probably mediate the attachment of the 5S RNA into the large ribosomal subunit, where it forms part of the central protuberance. In the 70S ribosome it contacts protein S13 of the 30S subunit (bridge B1b), connecting the 2 subunits; this bridge is implicated in subunit movement. May contact the P site tRNA; the 5S rRNA and some of its associated proteins might help stabilize positioning of ribosome-bound tRNAs. This Sulfolobus acidocaldarius (strain ATCC 33909 / DSM 639 / JCM 8929 / NBRC 15157 / NCIMB 11770) protein is Large ribosomal subunit protein uL5.